Here is a 418-residue protein sequence, read N- to C-terminus: E3 ubiquitin-protein ligase pellino homolog 1 (418 aa).

Positions 13-200 constitute an FHA; atypical domain; sequence APVKYGELIV…MHPRNGFTED (188 aa). Ser-121 is modified (phosphoserine). Thr-127 bears the Phosphothreonine mark. Residues 311–399 form a ring-like domain; necessary for ubiquitination of RIPK3 region; that stretch reads CGHVHGYHNW…TFHAACPFCA (89 aa).

It belongs to the pellino family. In terms of assembly, interacts with MAP3K7. Upon IL1B treatment, forms a complex with TRAF6, IRAK1, IRAK4 and MYD88; this complex recruits MAP3K7/TAK1, TAB1 and TAB2 to mediate NF-kappa-B activation. Direct binding of SMAD6 to PELI1 prevents the complex formation and hence negatively regulates IL1R-TLR signaling and eventually NF-kappa-B-mediated gene expression. Interacts (via atypical FHA domain) with RIPK3. Binds preferentially to the 'Thr-182' phosphorylated form of RIPK3. Interacts with RIPK1. Post-translationally, phosphorylation by IRAK1 and IRAK4 enhances its E3 ligase activity. Phosphorylated by ATM in response to DNA damage, promoting localization to DNA double-strand breaks (DSBs) and ability to mediate 'Lys-63'-linked ubiquitination of NBN. In terms of processing, sumoylated.

The protein resides in the chromosome. It catalyses the reaction S-ubiquitinyl-[E2 ubiquitin-conjugating enzyme]-L-cysteine + [acceptor protein]-L-lysine = [E2 ubiquitin-conjugating enzyme]-L-cysteine + N(6)-ubiquitinyl-[acceptor protein]-L-lysine.. It functions in the pathway protein modification; protein ubiquitination. Its function is as follows. E3 ubiquitin ligase catalyzing the covalent attachment of ubiquitin moieties onto substrate proteins. Involved in the TLR and IL-1 signaling pathways via interaction with the complex containing IRAK kinases and TRAF6. Acts as a positive regulator of inflammatory response in microglia through activation of NF-kappa-B and MAP kinase. Mediates 'Lys-63'-linked polyubiquitination of IRAK1 allowing subsequent NF-kappa-B activation. Conjugates 'Lys-63'-linked ubiquitin chains to the adapter protein ASC/PYCARD, which in turn is crucial for NLRP3 inflammasome activation. Mediates 'Lys-48'-linked polyubiquitination of RIPK3 leading to its subsequent proteasome-dependent degradation; preferentially recognizes and mediates the degradation of the 'Thr-182' phosphorylated form of RIPK3. Negatively regulates necroptosis by reducing RIPK3 expression. Mediates 'Lys-63'-linked ubiquitination of RIPK1. Following phosphorylation by ATM, catalyzes 'Lys-63'-linked ubiquitination of NBN, promoting DNA repair via homologous recombination. Negatively regulates activation of the metabolic mTORC1 signaling pathway by mediating 'Lys-63'-linked ubiquitination of mTORC1-inhibitory protein TSC1 and thereby promoting TSC1/TSC2 complex stability. This Mus musculus (Mouse) protein is E3 ubiquitin-protein ligase pellino homolog 1 (Peli1).